The following is a 248-amino-acid chain: Protein GrpE (248 aa).

Residues 229–248 (AAPKEDTLPAQENQSSPADS) form a disordered region. Positions 238–248 (AQENQSSPADS) are enriched in polar residues.

It belongs to the GrpE family. Homodimer.

It localises to the cytoplasm. In terms of biological role, participates actively in the response to hyperosmotic and heat shock by preventing the aggregation of stress-denatured proteins, in association with DnaK and GrpE. It is the nucleotide exchange factor for DnaK and may function as a thermosensor. Unfolded proteins bind initially to DnaJ; upon interaction with the DnaJ-bound protein, DnaK hydrolyzes its bound ATP, resulting in the formation of a stable complex. GrpE releases ADP from DnaK; ATP binding to DnaK triggers the release of the substrate protein, thus completing the reaction cycle. Several rounds of ATP-dependent interactions between DnaJ, DnaK and GrpE are required for fully efficient folding. This chain is Protein GrpE, found in Trichormus variabilis (strain ATCC 29413 / PCC 7937) (Anabaena variabilis).